A 206-amino-acid chain; its full sequence is MVFKIKDEWGEFLVRLARRAIEEYLKTGKEIEPPKDTPPELWEKMGVFVTLNRYNVPPQTALRGCIGFPTPIYPLVEATIKAAIYSAVDDPRFPPVKLEEMDNLVVEVSVLTPPELIEGPPEERPRKIKVGRDGLIVEKGIYSGLLLPQVPVEWGWDEEEFLAETCWKAGLPPDCWLDEDTKVYKFTAEIFEEEYPRGPIKRKPLV.

One can recognise an AMMECR1 domain in the interval 8–202 (EWGEFLVRLA…EEYPRGPIKR (195 aa)).

The protein is Protein PH0010 of Pyrococcus horikoshii (strain ATCC 700860 / DSM 12428 / JCM 9974 / NBRC 100139 / OT-3).